A 130-amino-acid chain; its full sequence is Protein NrdI (130 aa).

This sequence belongs to the NrdI family.

Probably involved in ribonucleotide reductase function. The chain is Protein NrdI from Staphylococcus carnosus (strain TM300).